Here is a 321-residue protein sequence, read N- to C-terminus: MTKYALVGDVGGTNARLALCEIDNGAISQAKTFSTADYDSLEAVIRAYLAEKQQDIKHGCIAIACPITDDWVEMTNHDWAFSTSSMKANLAFDSLEIINDFTAVSMAIPMLSEEHLMQFGGTTPAEDKPVAVYGAGTGLGVAHLVHVDKRWVSLPGEGGHVDFAANSEEEDLILEVLREELGHVSAERILSGNGLVNLYRAIVKSDHRQPEDLKPRDVTERALQDTCTDCRRALSMFCVIMGRFGGNLALNLGTFGGVYIAGGIVPRFLEFFKASGFRAAFEDKGRFKDYVAPIPVYLITHDYPGLLGSGAHLRQTLGRVL.

ATP is bound at residue 8–13 (GDVGGT).

This sequence belongs to the bacterial glucokinase family.

Its subcellular location is the cytoplasm. It catalyses the reaction D-glucose + ATP = D-glucose 6-phosphate + ADP + H(+). This Erwinia tasmaniensis (strain DSM 17950 / CFBP 7177 / CIP 109463 / NCPPB 4357 / Et1/99) protein is Glucokinase.